Reading from the N-terminus, the 271-residue chain is Gap junction beta-5 protein (271 aa).

Topologically, residues 1 to 20 (MNWSVFEGLLSGVNKYSTAF) are cytoplasmic. Residues 21-40 (GRIWLSLVFVFRVLVYLVTA) form a helical membrane-spanning segment. At 41–75 (ERVWGDDQKDFDCNTRQPGCTNVCYDEFFPVSHVR) the chain is on the extracellular side. A helical transmembrane segment spans residues 76–98 (LWALQLILVTCPSLLVVMHVAYR). At 99-124 (KAREKKYQQEVGKGYLYPNPGKKRGG) the chain is on the cytoplasmic side. A helical membrane pass occupies residues 125 to 147 (LWWTYVCSLLFKATIDIIFLYLF). Residues 148-182 (HAFYPRYTLPSMVKCHSAPCPNTVDCFIAKPSEKN) lie on the Extracellular side of the membrane. A helical transmembrane segment spans residues 183–205 (IFIVFMLVTAIVCILLNLVELLY). Topologically, residues 206-271 (LVIKRCSECA…PRAHVKKTIL (66 aa)) are cytoplasmic. The segment at 217–237 (AKRPPTAHAKNDPNWANPSSK) is disordered.

The protein belongs to the connexin family. Beta-type (group I) subfamily. As to quaternary structure, a connexon is composed of a hexamer of connexins. As to expression, expressed in skin.

Its subcellular location is the cell membrane. It localises to the cell junction. The protein localises to the gap junction. Functionally, one gap junction consists of a cluster of closely packed pairs of transmembrane channels, the connexons, through which materials of low MW diffuse from one cell to a neighboring cell. The polypeptide is Gap junction beta-5 protein (Gjb5) (Rattus norvegicus (Rat)).